Reading from the N-terminus, the 685-residue chain is Methionine--tRNA ligase (685 aa).

The 'HIGH' region signature appears at 12-22 (PYANGSIHLGH). Zn(2+) contacts are provided by cysteine 143, cysteine 146, cysteine 156, and cysteine 159. The 'KMSKS' region signature appears at 339-343 (KMSKS). Residue lysine 342 coordinates ATP. The 104-residue stretch at 582-685 (DFMKIDMRVA…AGAQPGDKVG (104 aa)) folds into the tRNA-binding domain.

The protein belongs to the class-I aminoacyl-tRNA synthetase family. MetG type 1 subfamily. As to quaternary structure, homodimer. Zn(2+) serves as cofactor.

The protein resides in the cytoplasm. It catalyses the reaction tRNA(Met) + L-methionine + ATP = L-methionyl-tRNA(Met) + AMP + diphosphate. Is required not only for elongation of protein synthesis but also for the initiation of all mRNA translation through initiator tRNA(fMet) aminoacylation. The protein is Methionine--tRNA ligase of Neisseria meningitidis serogroup C (strain 053442).